Reading from the N-terminus, the 403-residue chain is MAEKSTKNETALLVAQSAKSALQDFNHTYSKSWTFGDKWDNSNTMFETFVNKFLFPKINETLLIDIALGNRFNWLAKEQDFIGQYSEEYVIMDTVPINMDLSKNEELMLKRNYPRMATKLYGSGIVKKQKFTLNNNDTRFNFQTLADATNYALGVYKKKISDINVLEEKEMRAMLVDYSLNQLSESNVRKATSKEDLASKVFEAILNLQNNSAKYNEVHRASGGAIGQYTTVSKLKDIVILTTDSLKSYLLDTKIANTFQVAGIDFTDHVISFDDLGGVFKVTKDIVVSSDESVNFLRAYGDYQTHKGDTIPVGSVFTYDVSKLSEFKDSVEEIKPKSDLYAFILDINSIKYKRYTKGMLKQPFYNGEFDEVTHWIHYYSFKAISPFFNKILITDQDVTPRTE.

It is found in the virion. Functionally, assembles to form an icosahedral capsid. This chain is Major capsid protein, found in Staphylococcus phage S24-1.